Here is a 158-residue protein sequence, read N- to C-terminus: Non-specific lipid transfer protein GPI-anchored 29 (158 aa).

The first 24 residues, methionine 1–glycine 24, serve as a signal peptide directing secretion. 4 disulfides stabilise this stretch: cysteine 28–cysteine 71, cysteine 38–cysteine 55, cysteine 56–cysteine 95, and cysteine 69–cysteine 105. N-linked (GlcNAc...) asparagine glycosylation is present at asparagine 84. Serine 134 carries the GPI-anchor amidated serine lipid modification. The propeptide at lysine 135–isoleucine 158 is removed in mature form.

Belongs to the plant LTP family. Confined to the ovaries of the inflorescence.

The protein resides in the secreted. It localises to the cell membrane. Functionally, probable lipid transfer protein. The sequence is that of Non-specific lipid transfer protein GPI-anchored 29 from Arabidopsis thaliana (Mouse-ear cress).